Consider the following 365-residue polypeptide: 2-aminoethylphosphonate--pyruvate transaminase (365 aa).

The residue at position 194 (lysine 194) is an N6-(pyridoxal phosphate)lysine.

The protein belongs to the class-V pyridoxal-phosphate-dependent aminotransferase family. PhnW subfamily. In terms of assembly, homodimer. It depends on pyridoxal 5'-phosphate as a cofactor.

It carries out the reaction (2-aminoethyl)phosphonate + pyruvate = phosphonoacetaldehyde + L-alanine. In terms of biological role, involved in phosphonate degradation. This is 2-aminoethylphosphonate--pyruvate transaminase from Bacillus cereus (strain ZK / E33L).